The sequence spans 511 residues: Portal protein (511 aa).

The protein belongs to the Tevenvirinae portal protein family. Homododecamer. Interacts with the large terminase subunit. Interacts with the major capsid protein. Interacts with the capsid vertex protein.

The protein localises to the virion. Its function is as follows. Forms the portal vertex of the capsid. This portal plays critical roles in head assembly, genome packaging, neck/tail attachment, and genome ejection. The portal protein multimerizes as a single ring-shaped homododecamer arranged around a central channel. Binds to the terminase subunits to form the packaging machine. In Vibrio phage KVP40 (isolate Vibrio parahaemolyticus/Japan/Matsuzaki/1991) (KVP40), this protein is Portal protein.